The primary structure comprises 151 residues: Transcriptional repressor NrdR (151 aa).

A zinc finger lies at 3-34; sequence CPFCNAQDTKVIDSRLVSEGSQVRRRRSCNEC. The ATP-cone domain occupies 49–139; it reads PRLIKSDGRR…VYRSFKDVKE (91 aa).

The protein belongs to the NrdR family. Zn(2+) serves as cofactor.

Its function is as follows. Negatively regulates transcription of bacterial ribonucleotide reductase nrd genes and operons by binding to NrdR-boxes. The chain is Transcriptional repressor NrdR from Psychromonas ingrahamii (strain DSM 17664 / CCUG 51855 / 37).